The chain runs to 155 residues: DNA gyrase inhibitor (155 aa).

Belongs to the DNA gyrase inhibitor family. In terms of assembly, interacts with DNA gyrase.

The protein resides in the cytoplasm. Inhibits the supercoiling activity of DNA gyrase. Acts by inhibiting DNA gyrase at an early step, prior to (or at the step of) binding of DNA by the gyrase. It protects cells against toxins that target DNA gyrase, by inhibiting activity of these toxins and reducing the formation of lethal double-strand breaks in the cell. The protein is DNA gyrase inhibitor of Salmonella arizonae (strain ATCC BAA-731 / CDC346-86 / RSK2980).